A 327-amino-acid polypeptide reads, in one-letter code: GrpE protein homolog 2, mitochondrial (327 aa).

Residues 1-39 (MLVLRILSRVTRNAGIRSSLSAVTLPARNQTPVFSSRFH) constitute a mitochondrion transit peptide. The tract at residues 68 to 140 (SSSTSPESDE…DSESDDDELS (73 aa)) is disordered. 2 stretches are compositionally biased toward basic and acidic residues: residues 75-93 (SDEKKTHTEASKTSEEKPT) and 103-113 (SESKDSVTDSA). Over residues 130 to 140 (SDSESDDDELS) the composition is skewed to acidic residues.

It belongs to the GrpE family. In terms of assembly, probable component of the PAM complex, at least composed of SSC1 (mtHsp70), MGE1, TIM44, PAM16/TIM16, PAM17 and PAM18/TIM14. Interacts with SSQ1.

Its subcellular location is the mitochondrion matrix. Its function is as follows. Essential component of the PAM complex, a complex required for the translocation of transit peptide-containing proteins from the inner membrane into the mitochondrial matrix in an ATP-dependent manner. Seems to control the nucleotide-dependent binding of mitochondrial HSP70 to substrate proteins. Binds ATP. Interacts with copper ions Cu(2+). Confers thermotolerance to long-term exposure at moderately high temperature (TMHT at 35 degrees Celsius). This chain is GrpE protein homolog 2, mitochondrial, found in Arabidopsis thaliana (Mouse-ear cress).